A 202-amino-acid polypeptide reads, in one-letter code: Protein Thf1 (202 aa).

Positions 174-202 (IYKSSILKMEQAKELLQEAKIKDKKEKKK) form a coiled coil.

This sequence belongs to the THF1 family.

Its function is as follows. May be involved in photosynthetic membrane biogenesis. This Prochlorococcus marinus subsp. pastoris (strain CCMP1986 / NIES-2087 / MED4) protein is Protein Thf1.